A 485-amino-acid polypeptide reads, in one-letter code: Regulatory protein ViaA (485 aa).

The protein belongs to the ViaA family. In terms of assembly, homodimer. Interacts with RavA.

The protein resides in the cytoplasm. In terms of biological role, component of the RavA-ViaA chaperone complex, which may act on the membrane to optimize the function of some of the respiratory chains. ViaA stimulates the ATPase activity of RavA. The chain is Regulatory protein ViaA from Photorhabdus laumondii subsp. laumondii (strain DSM 15139 / CIP 105565 / TT01) (Photorhabdus luminescens subsp. laumondii).